The sequence spans 475 residues: Protein FIZZY-RELATED 1 (475 aa).

Residues 1–27 are disordered; the sequence is MEEDESTTPKKKSDSQLNLPPSMNRPT. Residues 15–27 are compositionally biased toward polar residues; the sequence is SQLNLPPSMNRPT. WD repeat units follow at residues 166 to 203, 207 to 246, 249 to 289, 290 to 329, 332 to 374, 376 to 417, and 420 to 459; these read QDDF…VTKL, GVDE…NIRT, GHRL…SKLK, GHKS…PVLR, EHAA…HLNC, DTNS…KLAT, and GHSY…KSQS.

The protein belongs to the WD repeat CDC20/Fizzy family. As to quaternary structure, associates with the APC/C complex. Interacts with CDC20-1, CDC20-2, CYCA1-1, CYCA1-2, CYCA3-4, CYCB1-1 and CYCB1-2. Binds to GIG1. As to expression, expressed in the root tip, predominantly in the root cap, quiescent center cells, surrounding stem cells and columella.

The protein resides in the nucleus. It functions in the pathway protein modification; protein ubiquitination. Activator protein that regulates the ubiquitin ligase activity and substrate specificity of the anaphase promoting complex/cyclosome (APC/C). Required for meristem organization and maintenance of quiescent center identity and stem cells. This is Protein FIZZY-RELATED 1 (FZR1) from Arabidopsis thaliana (Mouse-ear cress).